The primary structure comprises 129 residues: Lysozyme C (129 aa).

Positions 1–129 (KIYKRCELAA…VSTWIKDCKL (129 aa)) constitute a C-type lysozyme domain. Disulfide bonds link cysteine 6-cysteine 127, cysteine 30-cysteine 115, cysteine 64-cysteine 80, and cysteine 76-cysteine 94. Residues glutamate 35 and aspartate 52 contribute to the active site.

It belongs to the glycosyl hydrolase 22 family. As to quaternary structure, monomer.

It is found in the secreted. The catalysed reaction is Hydrolysis of (1-&gt;4)-beta-linkages between N-acetylmuramic acid and N-acetyl-D-glucosamine residues in a peptidoglycan and between N-acetyl-D-glucosamine residues in chitodextrins.. Lysozymes have primarily a bacteriolytic function; those in tissues and body fluids are associated with the monocyte-macrophage system and enhance the activity of immunoagents. The sequence is that of Lysozyme C (LYZ) from Ortalis vetula (Plain chachalaca).